The sequence spans 1002 residues: Spore wall protein 2 (1002 aa).

Residues 1 to 18 (MIKLSLLLSLASFTAVLA) form the signal peptide. N-linked (GlcNAc...) asparagine glycosylation occurs at Asn308. The disordered stretch occupies residues 349–1002 (TSSGFEDAEE…DNTEEGEETT (654 aa)). Acidic residues predominate over residues 354–1002 (EDAEEGEDKD…DNTEEGEETT (649 aa)). A run of 24 repeats spans residues 357 to 368 (EEGEDKDNTGEG), 369 to 380 (EEGEDKDNTGEG), 381 to 392 (EEGEDKDNTGEG), 393 to 404 (EEGEDKDNTGEG), 405 to 416 (EEGEDKDNTGEG), 417 to 428 (EEGEDKDNTGEG), 429 to 440 (EEGEDKDNTGEG), 441 to 452 (EEGEDKDNTGEG), 453 to 464 (EEGEDKDNTGEG), 465 to 476 (EEGEDKDNTGEG), 477 to 488 (EEGEDKDNTGEG), 489 to 500 (EEGEDKDNTGEG), 501 to 512 (EEGEDKDNTGEG), 513 to 524 (EEGEDKDNTGEG), 525 to 536 (EEGEDKDNTGEG), 537 to 548 (EEGEDKDNTGEG), 549 to 560 (EEGEDKDNTGEG), 561 to 572 (EEGEDKDNTGEG), 576 to 587 (EEGEDKDNTGEG), 588 to 599 (EEGEDKDNTGEG), 600 to 611 (EEGEDKDNTGEG), 615 to 626 (EEGEDKDNTGEG), 627 to 638 (EEGEDKDNTGEG), and 639 to 650 (EEGEDKDNTGEG). The 50 X 12 AA tandem repeats of E-E-G-E-D-K-D-N-T-G-E-G stretch occupies residues 357–998 (EEGEDKDNTG…GEDKDNTEEG (642 aa)). Residues 651-662 (EEGEDKDNTGDA) form a 25; degenerate repeat. Residues 663 to 674 (EEGEEGEDKDST) form a 26; degenerate repeat. 22 repeat units span residues 678-689 (EEGEDKDNTGEG), 693-704 (EEGEDKDNTGEG), 708-719 (EEGEDKDNTGEG), 723-734 (EEGEDKDNTGEG), 735-746 (EEGEDKDNTGEG), 747-758 (EEGEDKDNTGEG), 759-770 (DEGEDKDNTGEG), 774-785 (EEGEDKDNTGEG), 786-797 (EEGEDKDNTGEG), 801-812 (EEGEDKDNTGEG), 816-827 (EEGEDKDNTGEG), 831-842 (EEGEDKDNTGEG), 843-854 (EEGEDKDNTGEG), 855-866 (EEGEDKDNTGEG), 867-878 (EEGEDKDNTGEG), 882-893 (EEGEDKDNTGEG), 894-905 (EEGEDKDNTGEG), 906-915 (EEGEDKDNTG), 918-929 (EEGEDKDNTGEG), 930-941 (EEGEDKDNTGEG), 942-953 (EEGEDKDNTGEG), and 957-969 (EEGE…GDAE). One copy of the 49; degenerate repeat lies at 972–983 (EEGEDKDNTGDA). Residues 987–998 (EEGEDKDNTEEG) form a 50; degenerate repeat.

In terms of assembly, component of a complex composed of at least SWP1 and SWP2.

It is found in the spore. Its subcellular location is the perispore. Functionally, spore wall component. The chain is Spore wall protein 2 (SWP2) from Encephalitozoon intestinalis (Microsporidian parasite).